The chain runs to 92 residues: DNA/RNA-binding protein Alba (92 aa).

N6-acetyllysine is present on Lys-11.

This sequence belongs to the histone-like Alba family. Acetylated. Acetylation at Lys-11 decreases DNA-binding affinity.

It localises to the cytoplasm. Its subcellular location is the chromosome. Binds double-stranded DNA tightly but without sequence specificity. Involved in DNA compaction. This chain is DNA/RNA-binding protein Alba, found in Pyrobaculum islandicum (strain DSM 4184 / JCM 9189 / GEO3).